The primary structure comprises 433 residues: MPREKPHINVVFIGHVDHGKSTTVGRLKYDLGLIPESELEKIREEAKKYGKEEFVFAYLMDRQKEERARGVTIDIAHTELETPHNYITIVDAPGHKDFVKNMITGASQADAAVLVVAADDGVQEQTQEHAVLARTFGINQIIVYINKMDKVNYDQKRFEEVKNQVLKLLKMIGYKDENIIAVIPGASFHGDNVVKKSDKMPWYNGPTLYEALDMLKPPQLPVDLPLRIPIQSALSIKGIGTVLTGRVETGKLKPGDKIIVLPSKKPNGAIGEVKSIEMHHKPLEEALPGDNIGFSVRGIEKGDVMRGDVAGHLDNPPTVAEEIVALIHVIYHPSAITVGYAPVLHVHTAHVPVRFEELRGKVNPATGQVIEENPQALRPGEAAVVKLKPLKPVVIEPFDKIPQLGRFAIRDMGRTVAIGIARQVTPKQIEIKK.

Residues 5–220 (KPHINVVFIG…ALDMLKPPQL (216 aa)) enclose the tr-type G domain. The tract at residues 14-21 (GHVDHGKS) is G1. A GTP-binding site is contributed by 14–21 (GHVDHGKS). A Mg(2+)-binding site is contributed by S21. The interval 70-74 (GVTID) is G2. Residues 91-94 (DAPG) are G3. Residues 91-95 (DAPGH) and 146-149 (NKMD) each bind GTP. The G4 stretch occupies residues 146–149 (NKMD). The G5 stretch occupies residues 186–188 (ASF).

Belongs to the TRAFAC class translation factor GTPase superfamily. Classic translation factor GTPase family. EF-Tu/EF-1A subfamily.

It localises to the cytoplasm. The enzyme catalyses GTP + H2O = GDP + phosphate + H(+). GTP hydrolase that promotes the GTP-dependent binding of aminoacyl-tRNA to the A-site of ribosomes during protein biosynthesis. The polypeptide is Elongation factor 1-alpha (Nanoarchaeum equitans (strain Kin4-M)).